Reading from the N-terminus, the 307-residue chain is Small ribosomal subunit biogenesis GTPase RsgA (307 aa).

The disordered stretch occupies residues 1–21 (MPSEHPFSDGIPTPNPKETMN). One can recognise a CP-type G domain in the interval 85–242 (RQDAWKTKLI…LIDSPGLQEF (158 aa)). GTP-binding positions include 135–138 (NKAD) and 184–192 (GQSGMGKST). 4 residues coordinate Zn(2+): cysteine 266, cysteine 271, histidine 273, and cysteine 279.

Belongs to the TRAFAC class YlqF/YawG GTPase family. RsgA subfamily. Monomer. Associates with 30S ribosomal subunit, binds 16S rRNA. The cofactor is Zn(2+).

It localises to the cytoplasm. One of several proteins that assist in the late maturation steps of the functional core of the 30S ribosomal subunit. Helps release RbfA from mature subunits. May play a role in the assembly of ribosomal proteins into the subunit. Circularly permuted GTPase that catalyzes slow GTP hydrolysis, GTPase activity is stimulated by the 30S ribosomal subunit. This chain is Small ribosomal subunit biogenesis GTPase RsgA, found in Neisseria meningitidis serogroup B (strain ATCC BAA-335 / MC58).